The following is a 175-amino-acid chain: Peptide deformylase (175 aa).

Residues C99 and H141 each coordinate Fe cation. E142 is an active-site residue. Fe cation is bound at residue H145.

Belongs to the polypeptide deformylase family. Requires Fe(2+) as cofactor.

The enzyme catalyses N-terminal N-formyl-L-methionyl-[peptide] + H2O = N-terminal L-methionyl-[peptide] + formate. Removes the formyl group from the N-terminal Met of newly synthesized proteins. Requires at least a dipeptide for an efficient rate of reaction. N-terminal L-methionine is a prerequisite for activity but the enzyme has broad specificity at other positions. This Rickettsia canadensis (strain McKiel) protein is Peptide deformylase.